A 274-amino-acid chain; its full sequence is Large ribosomal subunit protein uL2 (274 aa).

The disordered stretch occupies residues 224-256; the sequence is VMNPVDHPHGGGEGKTGEGRHPVDPWGNLTKGY. Basic and acidic residues predominate over residues 229–246; that stretch reads DHPHGGGEGKTGEGRHPV.

This sequence belongs to the universal ribosomal protein uL2 family. As to quaternary structure, part of the 50S ribosomal subunit. Forms a bridge to the 30S subunit in the 70S ribosome.

Its function is as follows. One of the primary rRNA binding proteins. Required for association of the 30S and 50S subunits to form the 70S ribosome, for tRNA binding and peptide bond formation. It has been suggested to have peptidyltransferase activity; this is somewhat controversial. Makes several contacts with the 16S rRNA in the 70S ribosome. In Polaromonas sp. (strain JS666 / ATCC BAA-500), this protein is Large ribosomal subunit protein uL2.